We begin with the raw amino-acid sequence, 108 residues long: MGFNKEDRILINNNNSRISRGISERYKGKEGRIRSNMMGKRHDVKSLLEYLDSTCIPIENMLCNDDESSIKPQSKYHRQKKFRNNFSSQNKFHHQKIFPRQKFSKFHR.

This chain is Putative DNA-directed RNA polymerase subunit 1 inactive homolog, found in Acanthamoeba polyphaga (Amoeba).